Here is a 122-residue protein sequence, read N- to C-terminus: Large ribosomal subunit protein uL14 (122 aa).

This sequence belongs to the universal ribosomal protein uL14 family. In terms of assembly, part of the 50S ribosomal subunit. Forms a cluster with proteins L3 and L19. In the 70S ribosome, L14 and L19 interact and together make contacts with the 16S rRNA in bridges B5 and B8.

Binds to 23S rRNA. Forms part of two intersubunit bridges in the 70S ribosome. The polypeptide is Large ribosomal subunit protein uL14 (Ligilactobacillus salivarius (strain UCC118) (Lactobacillus salivarius)).